The following is a 450-amino-acid chain: Alpha-2B adrenergic receptor (450 aa).

Topologically, residues 1–12 are extracellular; that stretch reads MDHQDPYSVQAT. Residues 13–38 traverse the membrane as a helical segment; the sequence is AAIAAAITFLILFTIFGNALVILAVL. At 39–48 the chain is on the cytoplasmic side; that stretch reads TSRSLRAPQN. A helical transmembrane segment spans residues 49–69; it reads LFLVSLAAADILVATLIIPFS. At 70–86 the chain is on the extracellular side; it reads LANELLGYWYFRRTWCE. C85 and C164 are disulfide-bonded. A helical membrane pass occupies residues 87–107; the sequence is VYLALDVLFCTSSIVHLCAIS. The Cytoplasmic portion of the chain corresponds to 108–128; sequence LDRYWAVSRALEYNSKRTPRR. The helical transmembrane segment at 129–149 threads the bilayer; the sequence is IKCIILTVWLIAAVISLPPLI. The Extracellular segment spans residues 150 to 172; it reads YKGDQGPQPRGRPQCKLNQEAWY. The chain crosses the membrane as a helical span at residues 173 to 193; sequence ILASSIGSFFAPCLIMILVYL. Residues 194–368 lie on the Cytoplasmic side of the membrane; it reads RIYLIAKRSN…RRAQLTREKR (175 aa). Disordered regions lie at residues 204-229 and 241-329; these read RRGP…GGAL and ASAR…PLQQ. Over residues 246 to 256 the composition is skewed to basic and acidic residues; the sequence is VNGHSKSTGEK. Residues 293–311 show a composition bias toward acidic residues; that stretch reads PEDEAEEEEEEEEEEEECE. Residues 312 to 326 are compositionally biased toward low complexity; sequence PQAVPVSPASACSPP. A helical transmembrane segment spans residues 369 to 389; that stretch reads FTFVLAVVIGVFVLCWFPFFF. The Extracellular portion of the chain corresponds to 390–405; the sequence is SYSLGAICPKHCKVPH. The helical transmembrane segment at 406–426 threads the bilayer; it reads GLFQFFFWIGYCNSSLNPVIY. The Cytoplasmic portion of the chain corresponds to 427-450; the sequence is TIFNQDFRRAFRRILCRPWTQTAW. A lipid anchor (S-palmitoyl cysteine) is attached at C442.

The protein belongs to the G-protein coupled receptor 1 family. Adrenergic receptor subfamily. ADRA2B sub-subfamily. In terms of assembly, interacts with RAB26. Interacts with PPP1R9B. Interacts with GGA1, GGA2 and GGA3.

It is found in the cell membrane. Its function is as follows. Alpha-2 adrenergic receptors mediate the catecholamine-induced inhibition of adenylate cyclase through the action of G proteins. The rank order of potency for agonists of this receptor is clonidine &gt; norepinephrine &gt; epinephrine = oxymetazoline &gt; dopamine &gt; p-tyramine = phenylephrine &gt; serotonin &gt; p-synephrine / p-octopamine. For antagonists, the rank order is yohimbine &gt; chlorpromazine &gt; phentolamine &gt; mianserine &gt; spiperone &gt; prazosin &gt; alprenolol &gt; propanolol &gt; pindolol. This is Alpha-2B adrenergic receptor (ADRA2B) from Homo sapiens (Human).